A 209-amino-acid chain; its full sequence is Guanylate kinase (209 aa).

In terms of domain architecture, Guanylate kinase-like spans 8–186 (GVLYIVSAPS…ALQDLVAITR (179 aa)). Position 15–22 (15–22 (APSGAGKT)) interacts with ATP.

The protein belongs to the guanylate kinase family.

It localises to the cytoplasm. The enzyme catalyses GMP + ATP = GDP + ADP. Its function is as follows. Essential for recycling GMP and indirectly, cGMP. The chain is Guanylate kinase from Thiobacillus denitrificans (strain ATCC 25259 / T1).